The primary structure comprises 220 residues: Adenylate kinase (220 aa).

10–15 (GAGKGT) contributes to the ATP binding site. Residues 30–59 (STGDMLRAAVKAGSPLGVEAKGYMDAGKLV) form an NMP region. Residues Thr-31, Arg-36, 57-59 (KLV), 85-88 (GFPR), and Gln-92 contribute to the AMP site. The interval 122–159 (GRRTHPASGRTYHVKFNPPKVEGKDDVTGEPLIQRDDD) is LID. Residues Arg-123 and 132 to 133 (TY) contribute to the ATP site. Residues Arg-156 and Arg-167 each contribute to the AMP site. Residue Gly-206 participates in ATP binding.

The protein belongs to the adenylate kinase family. As to quaternary structure, monomer.

The protein resides in the cytoplasm. It carries out the reaction AMP + ATP = 2 ADP. It functions in the pathway purine metabolism; AMP biosynthesis via salvage pathway; AMP from ADP: step 1/1. Catalyzes the reversible transfer of the terminal phosphate group between ATP and AMP. Plays an important role in cellular energy homeostasis and in adenine nucleotide metabolism. In Burkholderia ambifaria (strain ATCC BAA-244 / DSM 16087 / CCUG 44356 / LMG 19182 / AMMD) (Burkholderia cepacia (strain AMMD)), this protein is Adenylate kinase.